A 558-amino-acid chain; its full sequence is MTQWAMTESLEDRRRLVRVARGLEEGDLLVRGARVAQPVTREILEADVLIADGRVAVLGGTGDGLQAARVVEARGAFLAPGFIDGHVHIESSLLTPAGFARAVLLRGTTGVVAEPHEVVNVLGPQGLEWMLEAGRRSGLRVWASAPSCAPASGFEAGGARVGTAEVRQMLGQPGVLGLAEMMNYPGVLGGDEEVWAVIQAGRATGRRLDGHAAGVRGRDLQAYAAAGLHSDHEATTPEEARERLRAGLWLMVREGSAARNLQALLPVLRERPRRAMLVSDDVSVDELLELGHLDRLLRACVAGGLDPLDALALVTCNPAEYWGLHDVGLIAPGHLADFVLLRDLQSFEVLETFVGGAEAQPGELTPPLSGGGVHLGQGWDAATFEVPPGWPVLGIHAEQITTSREPEGSGDARLIVADRYGRGEWSACWTAGSGLTGGTLGISVLHDAHHAAFLGGSDTDVRMAGRALEALGGGLVVVSDGEVRASLPLPFAGLMTGEAPQEAAAGLARVTAATRALGCTLPYPVTTLSFLGLTVIPSLKLTPRGLLDVEAWQLVPSR.

It belongs to the metallo-dependent hydrolases superfamily. Adenine deaminase family. Mn(2+) is required as a cofactor.

The catalysed reaction is adenine + H2O + H(+) = hypoxanthine + NH4(+). This Deinococcus deserti (strain DSM 17065 / CIP 109153 / LMG 22923 / VCD115) protein is Adenine deaminase.